The sequence spans 302 residues: MNRPLAVIGPTGTGKSALALEFAERVGGEIVNADAMQQYRGMDIGTAKLTVEERRGIPHHQLDVLDVVETATVARYQQAAAADIETIAARGATPVIVGGSMLYIQSLLDEWSFPATDPAVRAKYEARLAEIGVAALHAELARVDAAAAASILPTDGRRIVRALEVVELTGEPFAASAPTIGAPRWDTAIIGLDWDTAVLDERLAQRTDKMFADGLVREVVDLLERGLRDGVTAARALGYAQVLADLDAGGDGSGAREPTFIGTRRYVRRQRSWFRRDHRVVWLDGASEGLVDDALRVWRAVS.

An ATP-binding site is contributed by G9–S16. Substrate is bound at residue T11–S16.

It belongs to the IPP transferase family. Monomer. The cofactor is Mg(2+).

It catalyses the reaction adenosine(37) in tRNA + dimethylallyl diphosphate = N(6)-dimethylallyladenosine(37) in tRNA + diphosphate. Catalyzes the transfer of a dimethylallyl group onto the adenine at position 37 in tRNAs that read codons beginning with uridine, leading to the formation of N6-(dimethylallyl)adenosine (i(6)A). This Mycolicibacterium smegmatis (strain ATCC 700084 / mc(2)155) (Mycobacterium smegmatis) protein is tRNA dimethylallyltransferase.